A 316-amino-acid polypeptide reads, in one-letter code: 4-hydroxy-3-methylbut-2-enyl diphosphate reductase (316 aa).

Cys12 serves as a coordination point for [4Fe-4S] cluster. Residues His41 and His74 each contribute to the (2E)-4-hydroxy-3-methylbut-2-enyl diphosphate site. Residues His41 and His74 each coordinate dimethylallyl diphosphate. Isopentenyl diphosphate contacts are provided by His41 and His74. Cys96 lines the [4Fe-4S] cluster pocket. His124 lines the (2E)-4-hydroxy-3-methylbut-2-enyl diphosphate pocket. His124 is a binding site for dimethylallyl diphosphate. His124 is an isopentenyl diphosphate binding site. Catalysis depends on Glu126, which acts as the Proton donor. Thr167 is a (2E)-4-hydroxy-3-methylbut-2-enyl diphosphate binding site. Cys197 contacts [4Fe-4S] cluster. Positions 225, 226, 227, and 269 each coordinate (2E)-4-hydroxy-3-methylbut-2-enyl diphosphate. Dimethylallyl diphosphate-binding residues include Ser225, Ser226, Asn227, and Ser269. Residues Ser225, Ser226, Asn227, and Ser269 each coordinate isopentenyl diphosphate.

The protein belongs to the IspH family. In terms of assembly, homodimer. [4Fe-4S] cluster is required as a cofactor.

The catalysed reaction is isopentenyl diphosphate + 2 oxidized [2Fe-2S]-[ferredoxin] + H2O = (2E)-4-hydroxy-3-methylbut-2-enyl diphosphate + 2 reduced [2Fe-2S]-[ferredoxin] + 2 H(+). The enzyme catalyses dimethylallyl diphosphate + 2 oxidized [2Fe-2S]-[ferredoxin] + H2O = (2E)-4-hydroxy-3-methylbut-2-enyl diphosphate + 2 reduced [2Fe-2S]-[ferredoxin] + 2 H(+). It participates in isoprenoid biosynthesis; dimethylallyl diphosphate biosynthesis; dimethylallyl diphosphate from (2E)-4-hydroxy-3-methylbutenyl diphosphate: step 1/1. It functions in the pathway isoprenoid biosynthesis; isopentenyl diphosphate biosynthesis via DXP pathway; isopentenyl diphosphate from 1-deoxy-D-xylulose 5-phosphate: step 6/6. In terms of biological role, catalyzes the conversion of 1-hydroxy-2-methyl-2-(E)-butenyl 4-diphosphate (HMBPP) into a mixture of isopentenyl diphosphate (IPP) and dimethylallyl diphosphate (DMAPP). Acts in the terminal step of the DOXP/MEP pathway for isoprenoid precursor biosynthesis. The sequence is that of 4-hydroxy-3-methylbut-2-enyl diphosphate reductase from Salmonella paratyphi C (strain RKS4594).